Consider the following 265-residue polypeptide: uncharacterized protein (265 aa).

This is an uncharacterized protein from Mycoplasma capricolum subsp. capricolum (strain California kid / ATCC 27343 / NCTC 10154).